The sequence spans 142 residues: Large ribosomal subunit protein uL11 (142 aa).

Belongs to the universal ribosomal protein uL11 family. Part of the ribosomal stalk of the 50S ribosomal subunit. Interacts with L10 and the large rRNA to form the base of the stalk. L10 forms an elongated spine to which L12 dimers bind in a sequential fashion forming a multimeric L10(L12)X complex. Post-translationally, one or more lysine residues are methylated.

Forms part of the ribosomal stalk which helps the ribosome interact with GTP-bound translation factors. The chain is Large ribosomal subunit protein uL11 from Vibrio campbellii (strain ATCC BAA-1116).